The primary structure comprises 124 residues: uncharacterized protein (124 aa).

Positions 62–72 are enriched in basic residues; that stretch reads KKNKKQTFLKH. The segment at 62-86 is disordered; the sequence is KKNKKQTFLKHHQSDDHSENKVYKS. The segment covering 73 to 83 has biased composition (basic and acidic residues); it reads HQSDDHSENKV. A coiled-coil region spans residues 80–112; sequence ENKVYKSKKLEKKIQQLNKKKQLIDTKINFLKE.

This is an uncharacterized protein from Dictyostelium discoideum (Social amoeba).